The following is a 302-amino-acid chain: Glutaminase (302 aa).

7 residues coordinate substrate: serine 61, asparagine 111, glutamate 155, asparagine 162, tyrosine 186, tyrosine 238, and valine 256.

Belongs to the glutaminase family. Homotetramer.

It carries out the reaction L-glutamine + H2O = L-glutamate + NH4(+). This Pseudomonas aeruginosa (strain LESB58) protein is Glutaminase.